Consider the following 212-residue polypeptide: Abscisic acid receptor PYL10 (212 aa).

The segment at 34–191 is START-like; the sequence is YAVGPGQCSS…NLQKLKSVSE (158 aa). Abscisate is bound by residues Lys70, 107-112, 134-140, and Glu156; these read ASTSTE and RLRNYRS. Residues 103 to 107 carry the Gate loop motif; that stretch reads SGLPA. Residues 133–135 carry the Latch loop motif; sequence HRL.

It belongs to the PYR/PYL/RCAR abscisic acid intracellular receptor family. As to quaternary structure, homodimer. Interacts with PP2C53. Binding to PP2C53 is dependent on the presence of abscisic acid (ABA). Interacts with PP2C50. Binding to PP2C50 is dependent on the presence of ABA.

It localises to the cytoplasm. Its subcellular location is the cytosol. The protein resides in the nucleus. Functionally, inhibits the protein phosphatases PP2C06 and PP2C09 when activated by abscisic acid (ABA). Together with PP2C53, SAPK8 and SAPK10, may form an ABA signaling module involved in stress response. This is Abscisic acid receptor PYL10 from Oryza sativa subsp. japonica (Rice).